Reading from the N-terminus, the 197-residue chain is dITP/XTP pyrophosphatase (197 aa).

8-13 provides a ligand contact to substrate; sequence TGNAGK. Mg(2+) is bound by residues glutamate 40 and aspartate 69. Aspartate 69 serves as the catalytic Proton acceptor. Substrate-binding positions include serine 70, 154–157, lysine 177, and 182–183; these read FGYD and HR.

Belongs to the HAM1 NTPase family. As to quaternary structure, homodimer. The cofactor is Mg(2+).

The catalysed reaction is XTP + H2O = XMP + diphosphate + H(+). It carries out the reaction dITP + H2O = dIMP + diphosphate + H(+). It catalyses the reaction ITP + H2O = IMP + diphosphate + H(+). In terms of biological role, pyrophosphatase that catalyzes the hydrolysis of nucleoside triphosphates to their monophosphate derivatives, with a high preference for the non-canonical purine nucleotides XTP (xanthosine triphosphate), dITP (deoxyinosine triphosphate) and ITP. Seems to function as a house-cleaning enzyme that removes non-canonical purine nucleotides from the nucleotide pool, thus preventing their incorporation into DNA/RNA and avoiding chromosomal lesions. In Salmonella typhi, this protein is dITP/XTP pyrophosphatase (rdgB).